Consider the following 199-residue polypeptide: Large ribosomal subunit protein mL51 (199 aa).

Residues 1–15 constitute a mitochondrion transit peptide; sequence MNSASISRLTSVIRT.

The protein belongs to the mitochondrion-specific ribosomal protein mL51 family. As to quaternary structure, component of the mitochondrial ribosome large subunit (39S) which comprises a 16S rRNA and about 50 distinct proteins.

It is found in the mitochondrion. The polypeptide is Large ribosomal subunit protein mL51 (mrpl-51) (Caenorhabditis briggsae).